The following is a 543-amino-acid chain: Tapetal oleosin GRP-17 (543 aa).

The segment at 1–67 is polar; sequence MSEELSQKPS…FLMPLLEVIK (67 aa). Transmembrane regions (helical) follow at residues 68–88, 98–118, and 119–139; these read IIIASVASVIFVGFACVTLAG, PVFIIFSPVLVPATIATVVLA, and TGFTAGGSFGATALGLIMWLV. The tract at residues 68–162 is hydrophobic; it reads IIIASVASVI…PAGLPPNSGA (95 aa). 2 disordered regions span residues 148 to 169 and 195 to 543; these read KDNPPPAGLPPNSGAGAGGAQS and GGKK…HMAE. The segment covering 201–212 has biased composition (gly residues); that stretch reads SGGGKSKFGGKG. Repeat copies occupy residues 220–223, 227–230, and 234–237. The span at 220–229 shows a compositional bias: low complexity; that stretch reads GMSSGDEGMS. Residues 220–514 form a 29 X 4 AA approximate tandem repeats of G-M-S-G region; sequence GMSSGDEGMS…GGMSESGMSG (295 aa). Over residues 230 to 240 the composition is skewed to gly residues; that stretch reads GSEGGMSGGEG. The segment covering 244-256 has biased composition (basic residues); that stretch reads KSGKGKLKAKLEK. 26 tandem repeats follow at residues 259–262, 269–272, 276–279, 301–304, 305–308, 312–315, 319–322, 344–347, 348–351, 355–358, 362–365, 387–390, 391–394, 398–401, 405–408, 410–413, 414–417, 438–441, 445–448, 458–461, 464–467, 468–471, 492–495, 499–502, 506–509, and 511–514. The span at 272-283 shows a compositional bias: gly residues; sequence GSEGGMSGGGGS. The segment covering 285–301 has biased composition (basic residues); it reads SKSKKSKLKAKLGKKKG. Residues 315 to 326 are compositionally biased toward gly residues; it reads GSEGGMSSGGGS. The segment covering 328-344 has biased composition (basic residues); that stretch reads SKSKKSKLKAKLGKKKS. The span at 345-357 shows a compositional bias: low complexity; it reads MSGGMSGSEEGMS. A compositionally biased stretch (gly residues) spans 358–370; the sequence is GSEGGMSGGGGGK. Over residues 371 to 387 the composition is skewed to basic residues; it reads SKSRKSKLKANLGKKKC. Composition is skewed to gly residues over residues 405-416 and 440-470; these read GISGGGMSGGSG and SGSGGGMSGSEGGVSGSEGSMSGGGMSGGSG. Basic residues predominate over residues 471 to 492; that stretch reads SKHKIGGGKHGGLRGKFGKKRG. Residues 495 to 505 are compositionally biased toward gly residues; that stretch reads GSEGGMSGSEG. Positions 518-531 are enriched in basic residues; the sequence is GKHKIGGGKHKFGG. Residues 532-543 are compositionally biased toward gly residues; the sequence is GKHGGGGGHMAE.

It belongs to the oleosin family. Proteolytically cleaved following anther tapetal breakdown. In terms of tissue distribution, flower specific, especially in anther tapetum, pollen (at protein level) and flowers florets.

It is found in the secreted. The protein localises to the extracellular space. It localises to the extracellular matrix. Its subcellular location is the pollen coat. The protein resides in the lipid droplet. It is found in the membrane. Its function is as follows. Lipid-binding oleosin pollen coat protein required to mediate pollen recognition by stigma cells and subsequent pollen hydration. Involved in anther tapetum development, especially for the physiology of tapetosomes. Also implicated in the formation of pollen coat. The chain is Tapetal oleosin GRP-17 from Arabidopsis thaliana (Mouse-ear cress).